Reading from the N-terminus, the 86-residue chain is Small ribosomal subunit protein bS20 (86 aa).

This sequence belongs to the bacterial ribosomal protein bS20 family.

Its function is as follows. Binds directly to 16S ribosomal RNA. The protein is Small ribosomal subunit protein bS20 of Bifidobacterium longum (strain DJO10A).